A 65-amino-acid polypeptide reads, in one-letter code: Large ribosomal subunit protein uL29 (65 aa).

It belongs to the universal ribosomal protein uL29 family.

The polypeptide is Large ribosomal subunit protein uL29 (Thioalkalivibrio sulfidiphilus (strain HL-EbGR7)).